The following is a 420-amino-acid chain: ATP-dependent Clp protease ATP-binding subunit ClpX (420 aa).

The 54-residue stretch at 4-57 (KTPGNNGKQKLFCSFCGKEQDAVKRLVAGPGVYICDECISLCNEIIAEDHEHSH) folds into the ClpX-type ZB domain. Positions 16, 19, 38, and 41 each coordinate Zn(2+). Position 122 to 129 (122 to 129 (PTGSGKTL)) interacts with ATP.

This sequence belongs to the ClpX chaperone family. In terms of assembly, component of the ClpX-ClpP complex. Forms a hexameric ring that, in the presence of ATP, binds to fourteen ClpP subunits assembled into a disk-like structure with a central cavity, resembling the structure of eukaryotic proteasomes.

Functionally, ATP-dependent specificity component of the Clp protease. It directs the protease to specific substrates. Can perform chaperone functions in the absence of ClpP. The protein is ATP-dependent Clp protease ATP-binding subunit ClpX of Leptospira interrogans serogroup Icterohaemorrhagiae serovar copenhageni (strain Fiocruz L1-130).